Here is a 247-residue protein sequence, read N- to C-terminus: MLSTALPQNKKGWQAMLDLRFQRLHGKTTLTTRHHVGLLTVQRPFYPEEETCHLCLLHPPGGIVGGDELIINAIIDSDCHTLITMPGASKFYRSSGAQAHLQQNLTLCNNATLEWLPQDSIFFPGAHATLHTVFHLSSSSTLLAWDLLCLGRPVIGETFSHGTLANRLEIWVDGSPLLIERLHVANGELTCVARKPWVGTMLFYLGNETQLEDIREKLTPLENYAGATLTDGLLTVRFLSDDNLRCQ.

This sequence belongs to the UreD family. UreD, UreF and UreG form a complex that acts as a GTP-hydrolysis-dependent molecular chaperone, activating the urease apoprotein by helping to assemble the nickel containing metallocenter of UreC. The UreE protein probably delivers the nickel.

It localises to the cytoplasm. Required for maturation of urease via the functional incorporation of the urease nickel metallocenter. The protein is Putative urease accessory protein UreD homolog of Escherichia coli O157:H7.